The chain runs to 437 residues: Protein farnesyltransferase subunit beta (437 aa).

5 PFTB repeats span residues 123-164 (ATDV…CIIG), 174-215 (REKL…SLTN), 222-263 (FEGT…VILK), 270-312 (LKSL…PLLH), and 332-374 (QQAL…SIAQ). (2E,6E)-farnesyl diphosphate is bound by residues 248–251 (HGGY) and 291–294 (RCNK). 2 residues coordinate Zn(2+): D297 and C299. A (2E,6E)-farnesyl diphosphate-binding site is contributed by 300–303 (YSFW). H362 is a Zn(2+) binding site. At T436 the chain carries Phosphothreonine.

Belongs to the protein prenyltransferase subunit beta family. Heterodimer of FNTA and FNTB. Requires Zn(2+) as cofactor.

It carries out the reaction L-cysteinyl-[protein] + (2E,6E)-farnesyl diphosphate = S-(2E,6E)-farnesyl-L-cysteinyl-[protein] + diphosphate. In terms of biological role, essential subunit of the farnesyltransferase complex. Catalyzes the transfer of a farnesyl moiety from farnesyl diphosphate to a cysteine at the fourth position from the C-terminus of several proteins having the C-terminal sequence Cys-aliphatic-aliphatic-X. The sequence is that of Protein farnesyltransferase subunit beta (FNTB) from Homo sapiens (Human).